Here is an 87-residue protein sequence, read N- to C-terminus: Small ribosomal subunit protein uS17 (87 aa).

It belongs to the universal ribosomal protein uS17 family. Part of the 30S ribosomal subunit.

In terms of biological role, one of the primary rRNA binding proteins, it binds specifically to the 5'-end of 16S ribosomal RNA. This is Small ribosomal subunit protein uS17 from Onion yellows phytoplasma (strain OY-M).